The chain runs to 350 residues: MRKIIHIDMDCFYAAVEMRDNPALREVPLAIGGSADRRGVISTCNYVARRFGVRSAMPSALARKLCPPLVLIPGRMAVYKEVSRLLRAIFLRYTEQVEPLSLDEAYLDVTMSPCCGGSATLMAREIRAAINTELGLTASAGVAPNKFLAKLASEQRKPDGLFVIRPQEVDEFVRQLPLGKLPGIGRKTADRLESLGLYSCEDARQLGNEELIARFGKLGEMLAGRIWGHDEQPVQAQRVRKTIGVETTLASDVLDEAACWQVLRQLIPELEQRFSVSHGKEQLMGQGIKLKFADFQQTTVYRRGGYQPERFHDLLHEGLLRAQGKPIRLLGLVVGLPAAGEVNQLALDLA.

The 182-residue stretch at 4 to 185 (IIHIDMDCFY…LPLGKLPGIG (182 aa)) folds into the UmuC domain. The Mg(2+) site is built by aspartate 8 and aspartate 103. Residue glutamate 104 is part of the active site.

Belongs to the DNA polymerase type-Y family. As to quaternary structure, monomer. The cofactor is Mg(2+).

The protein localises to the cytoplasm. The catalysed reaction is DNA(n) + a 2'-deoxyribonucleoside 5'-triphosphate = DNA(n+1) + diphosphate. Functionally, poorly processive, error-prone DNA polymerase involved in untargeted mutagenesis. Copies undamaged DNA at stalled replication forks, which arise in vivo from mismatched or misaligned primer ends. These misaligned primers can be extended by PolIV. Exhibits no 3'-5' exonuclease (proofreading) activity. May be involved in translesional synthesis, in conjunction with the beta clamp from PolIII. The protein is DNA polymerase IV of Aeromonas hydrophila subsp. hydrophila (strain ATCC 7966 / DSM 30187 / BCRC 13018 / CCUG 14551 / JCM 1027 / KCTC 2358 / NCIMB 9240 / NCTC 8049).